A 506-amino-acid chain; its full sequence is Tyrosine-protein phosphatase non-receptor type substrate 1 (506 aa).

An N-terminal signal peptide occupies residues 1–29; that stretch reads MEPARPAPGRLRPLLCLLLAASNAWTGTA. The Ig-like V-type domain occupies 30–145; the sequence is GDGELQVIQP…SGPGTHLTVS (116 aa). At 30 to 371 the chain is on the extracellular side; sequence GDGELQVIQP…PGPNDSNWTS (342 aa). A disulfide bond links C55 and C121. N-linked (GlcNAc...) asparagine glycosylation is present at N92. The segment at 136 to 159 is disordered; it reads SGPGTHLTVSAKPSPPVLSGPTVR. Ig-like C1-type domains lie at 148 to 248 and 255 to 348; these read PSPP…ANLS and PTLE…HTLE. 12 N-linked (GlcNAc...) asparagine glycosylation sites follow: N167, N179, N204, N210, N246, N270, N292, N311, N319, N344, N365, and N368. The cysteines at positions 170 and 228 are disulfide-linked. C273 and C331 are joined by a disulfide. The interval 344–364 is disordered; it reads NHTLEVSAPQKDQDTGQTPGP. The chain crosses the membrane as a helical span at residues 372–392; sequence IFIVVGVVCALLVALLIAALY. Residues 393 to 506 lie on the Cytoplasmic side of the membrane; the sequence is LLRIRQNKAK…EYASVQVQRK (114 aa). The segment at 402–468 is disordered; sequence KGSTSSTRLH…QARPPPVSED (67 aa). Residues 409 to 418 are compositionally biased toward basic and acidic residues; the sequence is RLHEPEKNTR. Polar residues predominate over residues 419 to 429; it reads ETTQIQDNNDI. Position 431 is a phosphotyrosine; by Tyr-kinases (Y431). An SH2-binding motif is present at residues 432–435; the sequence is ADLN. The short motif at 441 to 446 is the SH3-binding element; it reads KSTPKA. Over residues 444 to 456 the composition is skewed to polar residues; sequence PKANEPNNHTEYA. 3 positions are modified to phosphotyrosine; by Tyr-kinases: Y455, Y472, and Y498. 3 consecutive short sequence motifs (SH2-binding) follow at residues 455 to 458, 472 to 475, and 498 to 501; these read YASI, YADL, and YASV. The disordered stretch occupies residues 480–506; the sequence is LNRTPKQPAPKPEPSYSEYASVQVQRK. Polar residues predominate over residues 497–506; that stretch reads EYASVQVQRK.

As to quaternary structure, binds PTPN11 when tyrosine-phosphorylated, except in macrophages, where it primarily binds PTPN6. Binds GRB2 in vitro. Binds JAK2 irrespective of its phosphorylation status and forms a stable complex. Binds SCAP1 and/or SCAP2. The resulting complex recruits FYB1. Binds FGR and PTK2B. Interacts with TRIM2. In terms of processing, phosphorylated on tyrosine residues. In terms of tissue distribution, highly expressed in spleen macrophages. Detected in skin dendritic cells.

It is found in the membrane. Its function is as follows. Immunoglobulin-like cell surface receptor for CD47. Acts as docking protein and induces translocation of PTPN6, PTPN11 and other binding partners from the cytosol to the plasma membrane. Supports adhesion of cerebellar neurons, neurite outgrowth and glial cell attachment. May play a key role in intracellular signaling during synaptogenesis and in synaptic function. Involved in the negative regulation of receptor tyrosine kinase-coupled cellular responses induced by cell adhesion, growth factors or insulin. Mediates negative regulation of phagocytosis, mast cell activation and dendritic cell activation. CD47 binding prevents maturation of immature dendritic cells and inhibits cytokine production by mature dendritic cells. Plays a role in antiviral immunity and limits new world arenavirus infection by decreasing virus internalization. Receptor for THBS1. Interaction with THBS1 stimulates phosphorylation of SIRPA. In response to THBS1, involved in ROS signaling in non-phagocytic cells, stimulating NADPH oxidase-derived ROS production. This Bos taurus (Bovine) protein is Tyrosine-protein phosphatase non-receptor type substrate 1 (SIRPA).